Here is a 125-residue protein sequence, read N- to C-terminus: uncharacterized protein (125 aa).

Helical transmembrane passes span 9 to 29 (IANA…TLTG), 33 to 53 (GEKT…NMVV), 56 to 76 (IVQV…TLVV), and 100 to 120 (FWTA…LNAF).

The protein resides in the cell membrane. This is an uncharacterized protein from Streptomyces coelicolor (strain ATCC BAA-471 / A3(2) / M145).